The primary structure comprises 274 residues: Rhamnulose-1-phosphate aldolase (274 aa).

The active site involves Glu117. 3 residues coordinate Zn(2+): His141, His143, and His212.

It belongs to the aldolase class II family. RhaD subfamily. In terms of assembly, homotetramer. Requires Zn(2+) as cofactor.

It localises to the cytoplasm. It catalyses the reaction L-rhamnulose 1-phosphate = (S)-lactaldehyde + dihydroxyacetone phosphate. It functions in the pathway carbohydrate degradation; L-rhamnose degradation; glycerone phosphate from L-rhamnose: step 3/3. Catalyzes the reversible cleavage of L-rhamnulose-1-phosphate to dihydroxyacetone phosphate (DHAP) and L-lactaldehyde. This Escherichia fergusonii (strain ATCC 35469 / DSM 13698 / CCUG 18766 / IAM 14443 / JCM 21226 / LMG 7866 / NBRC 102419 / NCTC 12128 / CDC 0568-73) protein is Rhamnulose-1-phosphate aldolase.